We begin with the raw amino-acid sequence, 816 residues long: Phosphatidylinositol 4-kinase beta (816 aa).

The disordered stretch occupies residues 1–30 (MGDTVVEPTPLKPTSESTPGPAGSNGGSLL). Position 2 is an N-acetylglycine (Gly2). Positions 2 to 68 (GDTVVEPTPL…VKLLHGGVAI (67 aa)) are interaction with ACBD3. One can recognise a PIK helical domain in the interval 52-242 (CQEVLEKVKL…GTKLRKLILS (191 aa)). Positions 248–318 (AHRKRELPSL…TESIDNSFSS (71 aa)) are disordered. Ser258 bears the Phosphoserine mark. Residue Thr263 is modified to Phosphothreonine. A phosphoserine mark is found at Ser266, Ser275, Ser277, Ser284, and Ser294. Composition is skewed to polar residues over residues 278–297 (DATASISLSSNLKRTASNPK) and 306–318 (SSSTESIDNSFSS). Position 428 is a phosphoserine (Ser428). Thr438 is subject to Phosphothreonine. Ser511 carries the post-translational modification Phosphoserine. Residues Thr517 and Thr519 each carry the phosphothreonine modification. The region spanning 535-801 (EPWQEKVRRI…MVDGSMRSIT (267 aa)) is the PI3K/PI4K catalytic domain. The G-loop stretch occupies residues 541-547 (VRRIREG). The interval 668-676 (QVKDRHNGN) is catalytic loop. The interval 687–711 (HIDFGFILSSSPRNLGFETSAFKLT) is activation loop.

Belongs to the PI3/PI4-kinase family. Type III PI4K subfamily. In terms of assembly, interacts with ARF1 and ARF3 in the Golgi complex, but not with ARF4, ARF5 or ARF6. Interacts with NCS1/FREQ in a calcium-independent manner. Interacts with CALN1/CABP8 and CALN2/CABP7; in a calcium-dependent manner; this interaction competes with NCS1/FREQ binding. Interacts with ACBD3. Interacts with ARMH3, YWHAB, YWHAE, YWHAG, YWHAH, YWHAQ, YWHAZ and SFN. Interacts with GGA2 (via VHS domain); the interaction is important for PI4KB location at the Golgi apparatus membrane. Interacts with ATG9A. Mg(2+) is required as a cofactor. Requires Mn(2+) as cofactor.

It is found in the endomembrane system. Its subcellular location is the mitochondrion outer membrane. It localises to the rough endoplasmic reticulum membrane. The protein localises to the golgi apparatus. The protein resides in the golgi apparatus membrane. The enzyme catalyses a 1,2-diacyl-sn-glycero-3-phospho-(1D-myo-inositol) + ATP = a 1,2-diacyl-sn-glycero-3-phospho-(1D-myo-inositol 4-phosphate) + ADP + H(+). With respect to regulation, inhibited by wortmannin. Increased kinase activity upon interaction with NCS1/FREQ. Phosphorylates phosphatidylinositol (PI) in the first committed step in the production of the second messenger inositol-1,4,5,-trisphosphate (PIP). May regulate Golgi disintegration/reorganization during mitosis, possibly via its phosphorylation. Involved in Golgi-to-plasma membrane trafficking. May play an important role in the inner ear development. The protein is Phosphatidylinositol 4-kinase beta (PI4KB) of Otolemur garnettii (Small-eared galago).